Here is a 755-residue protein sequence, read N- to C-terminus: 1,4-alpha-glucan branching enzyme GlgB (755 aa).

Asp-431 serves as the catalytic Nucleophile. The active-site Proton donor is the Glu-484.

It belongs to the glycosyl hydrolase 13 family. GlgB subfamily. As to quaternary structure, monomer.

The catalysed reaction is Transfers a segment of a (1-&gt;4)-alpha-D-glucan chain to a primary hydroxy group in a similar glucan chain.. The protein operates within glycan biosynthesis; glycogen biosynthesis. Functionally, catalyzes the formation of the alpha-1,6-glucosidic linkages in glycogen by scission of a 1,4-alpha-linked oligosaccharide from growing alpha-1,4-glucan chains and the subsequent attachment of the oligosaccharide to the alpha-1,6 position. The chain is 1,4-alpha-glucan branching enzyme GlgB from Prochlorococcus marinus (strain NATL2A).